A 162-amino-acid polypeptide reads, in one-letter code: Xanthine-guanine phosphoribosyltransferase (162 aa).

5-phospho-alpha-D-ribose 1-diphosphate-binding positions include Arg-41 to Gly-42 and Asp-92 to Thr-100. Asp-93 is a binding site for Mg(2+). 2 residues coordinate guanine: Asp-96 and Ile-139. Xanthine is bound by residues Asp-96 and Ile-139. GMP is bound by residues Asp-96–Thr-100 and Trp-138–Ile-139.

The protein belongs to the purine/pyrimidine phosphoribosyltransferase family. XGPT subfamily. In terms of assembly, homotetramer. The cofactor is Mg(2+).

It localises to the cell inner membrane. It catalyses the reaction GMP + diphosphate = guanine + 5-phospho-alpha-D-ribose 1-diphosphate. The enzyme catalyses XMP + diphosphate = xanthine + 5-phospho-alpha-D-ribose 1-diphosphate. The catalysed reaction is IMP + diphosphate = hypoxanthine + 5-phospho-alpha-D-ribose 1-diphosphate. It functions in the pathway purine metabolism; GMP biosynthesis via salvage pathway; GMP from guanine: step 1/1. The protein operates within purine metabolism; XMP biosynthesis via salvage pathway; XMP from xanthine: step 1/1. Its function is as follows. Purine salvage pathway enzyme that catalyzes the transfer of the ribosyl-5-phosphate group from 5-phospho-alpha-D-ribose 1-diphosphate (PRPP) to the N9 position of the 6-oxopurines guanine and xanthine to form the corresponding ribonucleotides GMP (guanosine 5'-monophosphate) and XMP (xanthosine 5'-monophosphate), with the release of PPi. To a lesser extent, also acts on hypoxanthine. This Chromohalobacter salexigens (strain ATCC BAA-138 / DSM 3043 / CIP 106854 / NCIMB 13768 / 1H11) protein is Xanthine-guanine phosphoribosyltransferase.